The following is a 620-amino-acid chain: MAAGVFKSFMRDFFAVKYDEQRNDPQAERLDGNGRLYPNCSSDVWLRSCEREIVDPIEGHHSGHIPKWICGSLLRNGPGSWKVGDMTFGHLFDCSALLHRFAIRNGRVTYQNRFVDTETLRKNRSAQRIVVTEFGTAAVPDPCHSIFDRFAAIFRPDSGTDNSMISIYPFGDQYYTFTETPFMHRINPCTLATEARICTTDFVGVVNHTSHPHVLPSGTVYNLGTTMTRSGPAYTILSFPHGEQMFEDAHVVATLPCRWKLHPGYMHTFGLTDHYFVIVEQPLSVSLTEYIKAQLGGQNLSACLKWFEDRPTLFHLIDRVSGKLVQTYESEAFFYLHIINCFERDGHVVVDICSYRNPEMINCMYLEAIANMQTNPNYATLFRGRPLRFVLPLGTIPPASIAKRGLVKSFSLAGLSAPQVSRTMKHSVSQYADITYMPTNGKQATAGEESPKRDAKRGRYEEENLVNLVTMEGSQAEAFQGTNGIQLRPEMLCDWGCETPRIYYERYMGKNYRYFYAISSDVDAVNPGTLIKVDVWNKSCLTWCEENVYPSEPIFVPSPDPKSEDDGVILASMVLGGLNDRYVGLIVLCAKTMTELGRCDFHTNGPVPKCLHGWFAPNAI.

Fe cation contacts are provided by H211, H267, and H337. Residues 440 to 459 are disordered; sequence NGKQATAGEESPKRDAKRGR. Positions 449–459 are enriched in basic and acidic residues; that stretch reads ESPKRDAKRGR. H612 lines the Fe cation pocket.

This sequence belongs to the carotenoid oxygenase family. Fe(2+) serves as cofactor. As to expression, expression follows organogenesis of the larval Bolwig's organ (BO), which mediates larval photophobic behavior. In the adult, expression is restricted exclusively to the brain. Expressed in both neuronal cells and glia cells. Not active within photoreceptors. Active within neuronal cells within the central nervous system.

The enzyme catalyses all-trans-zeaxanthin + O2 = (3R)-11-cis-3-hydroxyretinal + (3R)-all-trans-3-hydroxyretinal. It participates in cofactor metabolism; retinol metabolism. Its function is as follows. Catalyzes the oxidative cleavage at the 15,15'-double bond of carotenoids and the simultaneous all-trans to 11-cis isomerization of one cleavage product. Carotenoids like 11-cis retinal can promote visual pigment biogenesis in the dark. Essential for the biosynthesis of the 3-hydroxyretinal chromophore of rhodopsin from zeaxanthin and for proper photoreceptor development. Also essential for larval light perception. In Drosophila melanogaster (Fruit fly), this protein is Carotenoid isomerooxygenase (ninaB).